Consider the following 117-residue polypeptide: Nascent polypeptide-associated complex protein (117 aa).

The NAC-A/B domain maps to 9–77 (PKQLKQMQRA…ARERSLEAEM (69 aa)).

It belongs to the NAC-alpha family. In terms of assembly, homodimer. Interacts with the ribosome. Binds ribosomal RNA.

Functionally, contacts the emerging nascent chain on the ribosome. This is Nascent polypeptide-associated complex protein from Methanothermobacter thermautotrophicus (strain ATCC 29096 / DSM 1053 / JCM 10044 / NBRC 100330 / Delta H) (Methanobacterium thermoautotrophicum).